The chain runs to 283 residues: 4-diphosphocytidyl-2-C-methyl-D-erythritol kinase (283 aa).

Lysine 13 is an active-site residue. ATP is bound at residue proline 96 to serine 106. Aspartate 138 is a catalytic residue.

The protein belongs to the GHMP kinase family. IspE subfamily.

It carries out the reaction 4-CDP-2-C-methyl-D-erythritol + ATP = 4-CDP-2-C-methyl-D-erythritol 2-phosphate + ADP + H(+). Its pathway is isoprenoid biosynthesis; isopentenyl diphosphate biosynthesis via DXP pathway; isopentenyl diphosphate from 1-deoxy-D-xylulose 5-phosphate: step 3/6. Its function is as follows. Catalyzes the phosphorylation of the position 2 hydroxy group of 4-diphosphocytidyl-2C-methyl-D-erythritol. The polypeptide is 4-diphosphocytidyl-2-C-methyl-D-erythritol kinase (Pseudomonas fluorescens (strain Pf0-1)).